The chain runs to 229 residues: Large ribosomal subunit protein uL1 (229 aa).

It belongs to the universal ribosomal protein uL1 family. Part of the 50S ribosomal subunit.

In terms of biological role, binds directly to 23S rRNA. The L1 stalk is quite mobile in the ribosome, and is involved in E site tRNA release. Functionally, protein L1 is also a translational repressor protein, it controls the translation of the L11 operon by binding to its mRNA. This is Large ribosomal subunit protein uL1 from Mannheimia succiniciproducens (strain KCTC 0769BP / MBEL55E).